The primary structure comprises 203 residues: Holliday junction branch migration complex subunit RuvA (203 aa).

The segment at 1–63 (MIGKLSGKID…EEHIHLYGFL (63 aa)) is domain I. Positions 64–142 (TLEEKNFFNL…KISSGSVIIK (79 aa)) are domain II. The tract at residues 143–149 (DSLNIKN) is flexible linker. The tract at residues 150 to 203 (ITPVASNEVIKALVNLGFSRFEAQNAVQGIIIQNPEISIDELIKTALKNRNAGL) is domain III.

The protein belongs to the RuvA family. Homotetramer. Forms an RuvA(8)-RuvB(12)-Holliday junction (HJ) complex. HJ DNA is sandwiched between 2 RuvA tetramers; dsDNA enters through RuvA and exits via RuvB. An RuvB hexamer assembles on each DNA strand where it exits the tetramer. Each RuvB hexamer is contacted by two RuvA subunits (via domain III) on 2 adjacent RuvB subunits; this complex drives branch migration. In the full resolvosome a probable DNA-RuvA(4)-RuvB(12)-RuvC(2) complex forms which resolves the HJ.

The protein localises to the cytoplasm. In terms of biological role, the RuvA-RuvB-RuvC complex processes Holliday junction (HJ) DNA during genetic recombination and DNA repair, while the RuvA-RuvB complex plays an important role in the rescue of blocked DNA replication forks via replication fork reversal (RFR). RuvA specifically binds to HJ cruciform DNA, conferring on it an open structure. The RuvB hexamer acts as an ATP-dependent pump, pulling dsDNA into and through the RuvAB complex. HJ branch migration allows RuvC to scan DNA until it finds its consensus sequence, where it cleaves and resolves the cruciform DNA. This is Holliday junction branch migration complex subunit RuvA from Rickettsia felis (strain ATCC VR-1525 / URRWXCal2) (Rickettsia azadi).